A 259-amino-acid polypeptide reads, in one-letter code: Transmembrane protein 81 (259 aa).

Residues 1–18 form the signal peptide; that stretch reads MALSTLWLVLMLWTSLFS. Residues 19-221 are Extracellular-facing; that stretch reads DSQCSTLSQA…KVYSSSTIRN (203 aa). The Ig-like domain occupies 97–172; the sequence is GRRLVLDCLE…VLDTGKRRVK (76 aa). An intrachain disulfide couples cysteine 104 to cysteine 161. Residues 222–242 traverse the membrane as a helical segment; it reads IVIISVPLSFAIAVVIFIFLF. Residues 243-259 lie on the Cytoplasmic side of the membrane; the sequence is CYSRRARRAAHLCQDNI.

Forms a complex with izumo1 and spaca6 on spermatocyte cell membrane. The complex binds to oocyte protein bncr. In terms of tissue distribution, expressed in sperm.

It localises to the cell membrane. Its function is as follows. Essential fertilization factor required for male fertility. Part of a conserved trimeric sperm complex with the essential fertilization factors IZUMO1 and SPACA6 which bridges sperm and oocyte membranes during fertilization by binding to IZUMO1R/JUNO on the oocyte. The protein is Transmembrane protein 81 of Danio rerio (Zebrafish).